The following is an 82-amino-acid chain: Large ribosomal subunit protein bL27 (82 aa).

Residues methionine 1–leucine 21 are disordered.

Belongs to the bacterial ribosomal protein bL27 family.

The sequence is that of Large ribosomal subunit protein bL27 from Tropheryma whipplei (strain TW08/27) (Whipple's bacillus).